Reading from the N-terminus, the 162-residue chain is UPF0460 protein y4vQ (162 aa).

The protein belongs to the UPF0460 family.

The protein is UPF0460 protein y4vQ of Sinorhizobium fredii (strain NBRC 101917 / NGR234).